Reading from the N-terminus, the 462-residue chain is Probable alcohol acetyltransferase crmB (462 aa).

This sequence belongs to the alcohol acetyltransferase FCK4 family.

The protein operates within secondary metabolite biosynthesis. Functionally, probable alcohol acetyltransferase; part of the crm gene cluster that mediates the biosynthesis of a yet unidentified copper-responsive metabolite. In contrast to crmA, is not involved in the biosynthesis of fumivalines or fumicicolins. This chain is Probable alcohol acetyltransferase crmB, found in Aspergillus fumigatus (strain ATCC MYA-4609 / CBS 101355 / FGSC A1100 / Af293) (Neosartorya fumigata).